A 224-amino-acid chain; its full sequence is Protein GrpE (224 aa).

2 stretches are compositionally biased toward polar residues: residues 1-16 and 209-224; these read MSGDASTSAQDQNVES and ESSSDAASEQPQEGDA. Disordered regions lie at residues 1 to 35 and 203 to 224; these read MSGDASTSAQDQNVESNDVPAIPDVDAGTPIDPVV and SMGPGPESSSDAASEQPQEGDA.

The protein belongs to the GrpE family. As to quaternary structure, homodimer.

It is found in the cytoplasm. Functionally, participates actively in the response to hyperosmotic and heat shock by preventing the aggregation of stress-denatured proteins, in association with DnaK and GrpE. It is the nucleotide exchange factor for DnaK and may function as a thermosensor. Unfolded proteins bind initially to DnaJ; upon interaction with the DnaJ-bound protein, DnaK hydrolyzes its bound ATP, resulting in the formation of a stable complex. GrpE releases ADP from DnaK; ATP binding to DnaK triggers the release of the substrate protein, thus completing the reaction cycle. Several rounds of ATP-dependent interactions between DnaJ, DnaK and GrpE are required for fully efficient folding. This Synechococcus sp. (strain CC9902) protein is Protein GrpE.